Consider the following 808-residue polypeptide: Receptor like protein 27 (808 aa).

Residues 1-31 (MLFFIKVFMKTILSVLLLFFIFASSFTLVVG) form the signal peptide. Over 32 to 740 (LAGCRPDQIQ…DEDEEVLNWK (709 aa)) the chain is Extracellular. 7 N-linked (GlcNAc...) asparagine glycosylation sites follow: Asn-56, Asn-68, Asn-90, Asn-103, Asn-108, Asn-144, and Asn-167. 12 LRR repeats span residues 96 to 120 (LQHL…GFGN), 122 to 144 (NRLE…SFSN), 145 to 170 (LSQL…NLTK), 172 to 192 (SILV…LLTL), 193 to 218 (PFLS…STSS), 220 to 241 (LEFM…ISKL), 242 to 265 (INLK…LFSS), 266 to 291 (FKSL…SKIP), 293 to 314 (NLEN…LKNL), 315 to 338 (TKLE…FWNL), 340 to 363 (RLRR…VLVN), and 364 to 387 (SSVR…PLSI). Residue Asn-213 is glycosylated (N-linked (GlcNAc...) asparagine). Asn-313 is a glycosylation site (N-linked (GlcNAc...) asparagine). Asn-363 carries N-linked (GlcNAc...) asparagine glycosylation. One copy of the LRR 13; degenerate repeat lies at 388-407 (NLLSAWNNSFTGNIPLETCN). Residues Asn-394, Asn-407, and Asn-420 are each glycosylated (N-linked (GlcNAc...) asparagine). 10 LRR repeats span residues 408 to 434 (RSSL…DFQE), 436 to 456 (LIVV…IFSD), 457 to 481 (GALL…LLNC), 483 to 504 (MLRF…WLKA), 505 to 529 (LPDL…DRGP), 532 to 556 (FPKL…YFVN), 601 to 625 (LTSY…IGLL), 626 to 649 (KALI…LANV), 650 to 673 (TELE…LKTL), and 675 to 698 (FLAY…QITG). An N-linked (GlcNAc...) asparagine glycan is attached at Asn-480. Residue Asn-544 is glycosylated (N-linked (GlcNAc...) asparagine). Asn-632 and Asn-648 each carry an N-linked (GlcNAc...) asparagine glycan. A helical transmembrane segment spans residues 741-761 (AVVIGYWPGLLLGLIMAHVIA). The Cytoplasmic segment spans residues 762-808 (SFKPKWLVKIVGPEKRKEDNPVRLFMTLDSRWDSFNNKKNVEQKSDM).

Belongs to the RLP family.

It localises to the cell membrane. This Arabidopsis thaliana (Mouse-ear cress) protein is Receptor like protein 27.